The following is a 582-amino-acid chain: 15-cis-phytoene desaturase, chloroplastic/chromoplastic (582 aa).

The transit peptide at 1–110 (MPQIGLVSAV…FRSSPRPTKP (110 aa)) directs the protein to the chloroplast and chromoplast. Residues 140-141 (EA), Lys-148, 165-166 (HI), and Tyr-171 contribute to the FAD site. Substrate is bound at residue Arg-306. 2 residues coordinate FAD: Ile-348 and Asp-537. Ala-545 contacts substrate. Residue Met-547 coordinates FAD.

This sequence belongs to the carotenoid/retinoid oxidoreductase family. Homotetramer. FAD is required as a cofactor.

The protein localises to the plastid. It localises to the chloroplast. It is found in the chromoplast. The protein resides in the membrane. The enzyme catalyses 2 a plastoquinone + 15-cis-phytoene = 9,9',15-tri-cis-zeta-carotene + 2 a plastoquinol. The protein operates within carotenoid biosynthesis; lycopene biosynthesis. With respect to regulation, inhibited by the herbicides metflurazon, difunone, fluridone and diflufenican. Functionally, converts phytoene into zeta-carotene via the intermediary of phytofluene by the symmetrical introduction of two double bonds at the C-11 and C-11' positions of phytoene with a concomitant isomerization of two neighboring double bonds at the C9 and C9' positions from trans to cis. The sequence is that of 15-cis-phytoene desaturase, chloroplastic/chromoplastic (PDS) from Capsicum annuum (Capsicum pepper).